A 28-amino-acid polypeptide reads, in one-letter code: Mast cell degranulating peptide (28 aa).

Disulfide bonds link Cys-2/Cys-18 and Cys-4/Cys-22.

In terms of tissue distribution, expressed by the venom gland.

The protein localises to the secreted. Mast cell degranulating peptide. The polypeptide is Mast cell degranulating peptide (Bombus pensylvanicus (American bumblebee)).